Consider the following 601-residue polypeptide: Deoxyhypusine synthase (601 aa).

NAD(+) contacts are provided by residues 109–113 (ANLMG) and 184–186 (SGG). Spermidine is bound at residue 189 to 190 (EH). Residues 210–242 (GHVSSTVSSEATAPPKGLQQRAEKPLGTRAAAG) are disordered. The span at 211–220 (HVSSTVSSEA) shows a compositional bias: polar residues. NAD(+) is bound at residue D398. The interval 411–451 (PAARPAHRKGGPVADENAGNSKELKRSRKASSSSSTSATAV) is disordered. Residues 440 to 451 (ASSSSSTSATAV) show a composition bias toward low complexity. An NAD(+)-binding site is contributed by G489. H494 serves as a coordination point for spermidine. 514–515 (NG) lines the NAD(+) pocket. Spermidine is bound by residues 520 to 522 (GSD) and 529 to 535 (EALSWGK). K535 serves as the catalytic Nucleophile. 548 to 549 (EV) contacts NAD(+). The tract at residues 568 to 601 (RRATDDAQPRRKRSSRGARPPQDVSGHSHLCRGE) is disordered.

Belongs to the deoxyhypusine synthase family. Homodimer. The cofactor is NAD(+).

The catalysed reaction is [eIF5A protein]-L-lysine + spermidine = [eIF5A protein]-deoxyhypusine + propane-1,3-diamine. It participates in protein modification; eIF5A hypusination. With respect to regulation, N1-guanyl-1,7-diaminoheptane has a small inhibitory effect on activity. Its function is as follows. Catalyzes the NAD-dependent oxidative cleavage of spermidine and the subsequent transfer of the butylamine moiety of spermidine to the epsilon-amino group of a specific lysine residue of the eIF-5A precursor protein to form the intermediate deoxyhypusine residue. In Leishmania donovani, this protein is Deoxyhypusine synthase.